We begin with the raw amino-acid sequence, 515 residues long: Maturase K (515 aa).

The protein belongs to the intron maturase 2 family. MatK subfamily.

The protein resides in the plastid. The protein localises to the chloroplast. In terms of biological role, usually encoded in the trnK tRNA gene intron. Probably assists in splicing its own and other chloroplast group II introns. The polypeptide is Maturase K (Pinus halepensis (Aleppo pine)).